Here is a 183-residue protein sequence, read N- to C-terminus: Archaemetzincin (183 aa).

H131 contacts Zn(2+). Residue E132 is the Proton acceptor of the active site. Zn(2+) is bound by residues H135, H141, C142, C147, C166, and C169.

The protein belongs to the peptidase M54 family. As to quaternary structure, monomer. Zn(2+) is required as a cofactor.

Probable zinc metalloprotease whose natural substrate is unknown. The chain is Archaemetzincin from Saccharolobus islandicus (strain L.S.2.15 / Lassen #1) (Sulfolobus islandicus).